A 406-amino-acid chain; its full sequence is Putative cyclin-F3-2 (406 aa).

The tract at residues 1 to 107 (MARPRTRSVA…PGAAGGPWQL (107 aa)) is disordered. Composition is skewed to low complexity over residues 11-21 (RMEATAAAAAA) and 29-57 (NPDG…NAGE).

Belongs to the cyclin family. Cyclin F subfamily.

The protein is Putative cyclin-F3-2 (CYCF3-2) of Oryza sativa subsp. japonica (Rice).